Consider the following 62-residue polypeptide: Large ribosomal subunit protein bL28 (62 aa).

It belongs to the bacterial ribosomal protein bL28 family.

This chain is Large ribosomal subunit protein bL28, found in Thermoanaerobacter pseudethanolicus (strain ATCC 33223 / 39E) (Clostridium thermohydrosulfuricum).